Consider the following 795-residue polypeptide: Protocadherin beta-12 (795 aa).

The first 26 residues, 1-26 (MENGGAGTLQIRQVLLFFVLLGMSQA), serve as a signal peptide directing secretion. Residues 27–690 (GSETGNFLVM…AQADSLTVYL (664 aa)) are Extracellular-facing. Cadherin domains follow at residues 35-133 (VMEE…SPVF), 138-242 (MLLE…SPEF), 247-347 (YEVK…APEI), 352-451 (ITSP…APAF), and 456-561 (YALF…SPFV). N-linked (GlcNAc...) asparagine glycosylation is found at asparagine 418, asparagine 436, asparagine 487, and asparagine 567. Residues 568–671 (GSAPCTELVP…LVDGFSQPYL (104 aa)) form the Cadherin 6 domain. The helical transmembrane segment at 691–711 (VVALASVSSLFLFSVLLFVAV) threads the bilayer. At 712–795 (RLCRRSRAAP…NPPFQNNLGF (84 aa)) the chain is on the cytoplasmic side.

It localises to the cell membrane. Functionally, potential calcium-dependent cell-adhesion protein. May be involved in the establishment and maintenance of specific neuronal connections in the brain. The protein is Protocadherin beta-12 (PCDHB12) of Homo sapiens (Human).